The primary structure comprises 308 residues: Ribosomal RNA small subunit methyltransferase H (308 aa).

S-adenosyl-L-methionine is bound by residues 36 to 38 (GGH), Asp-55, Phe-82, Asp-103, and Gln-110.

This sequence belongs to the methyltransferase superfamily. RsmH family.

The protein localises to the cytoplasm. It catalyses the reaction cytidine(1402) in 16S rRNA + S-adenosyl-L-methionine = N(4)-methylcytidine(1402) in 16S rRNA + S-adenosyl-L-homocysteine + H(+). Its function is as follows. Specifically methylates the N4 position of cytidine in position 1402 (C1402) of 16S rRNA. This Helicobacter pylori (strain J99 / ATCC 700824) (Campylobacter pylori J99) protein is Ribosomal RNA small subunit methyltransferase H.